Consider the following 250-residue polypeptide: 5-oxoprolinase subunit A (250 aa).

Belongs to the LamB/PxpA family. As to quaternary structure, forms a complex composed of PxpA, PxpB and PxpC.

The enzyme catalyses 5-oxo-L-proline + ATP + 2 H2O = L-glutamate + ADP + phosphate + H(+). In terms of biological role, catalyzes the cleavage of 5-oxoproline to form L-glutamate coupled to the hydrolysis of ATP to ADP and inorganic phosphate. This chain is 5-oxoprolinase subunit A, found in Nocardia farcinica (strain IFM 10152).